The chain runs to 909 residues: GTPase activating protein homolog 4 (909 aa).

One can recognise an F-BAR domain in the interval M1–C257. Residues I322–S513 enclose the Rho-GAP domain. The segment at I529–S909 is disordered. Low complexity-rich tracts occupy residues S533–N562 and S571–Q602. Residues S609–F625 are compositionally biased toward pro residues. A compositionally biased stretch (polar residues) spans Q651–Q674. A coiled-coil region spans residues K672–S809. Basic and acidic residues predominate over residues L675–K716. Residues S723–S741 show a composition bias toward low complexity. A compositionally biased stretch (basic and acidic residues) spans N742 to I765. Over residues A767–S785 the composition is skewed to polar residues. Composition is skewed to low complexity over residues Q786–S828 and S843–S892.

It is found in the cytoplasm. The protein localises to the contractile vacuole. In terms of biological role, rho GTPase-activating protein involved in the signal transduction pathway. The polypeptide is GTPase activating protein homolog 4 (mgp4) (Dictyostelium discoideum (Social amoeba)).